A 142-amino-acid polypeptide reads, in one-letter code: Mitochondrial import receptor subunit TOM22 homolog (142 aa).

A compositionally biased stretch (low complexity) spans 1 to 18 (MAAAVAAAGAGEPLSPEE). The segment at 1 to 41 (MAAAVAAAGAGEPLSPEELLPKAEAEKAEEELEEDDDDELD) is disordered. N-acetylalanine is present on Ala2. The Cytoplasmic portion of the chain corresponds to 2–83 (AAAVAAAGAG…AQKMYRFSRA (82 aa)). At Ser15 the chain carries Phosphoserine. The span at 27–41 (KAEEELEEDDDDELD) shows a compositional bias: acidic residues. Residues 41-50 (DETLSERLWG) are import sequence; necessary for mitochondrion outer membrane localization and integration in the TOM complex. At Thr43 the chain carries Phosphothreonine. Ser45 bears the Phosphoserine mark. A TMD; necessary for mitochondrion outer membrane localization and integration in the TOM complex region spans residues 83–103 (AALWIGTTSFMILVLPVVFET). The chain crosses the membrane as a helical span at residues 84–103 (ALWIGTTSFMILVLPVVFET). The Mitochondrial intermembrane portion of the chain corresponds to 104–142 (EKLQMEQQQQLQQRQILLGPNTGLSGGMPGALPPLPGKM). The segment at 123-142 (PNTGLSGGMPGALPPLPGKM) is C-tail signal; necessary for mitochondrion outer membrane localization and integration in the TOM complex.

It belongs to the Tom22 family. Forms part of the preprotein translocase complex of the outer mitochondrial membrane (TOM complex) which consists of at least 7 different proteins (TOMM5, TOMM6, TOMM7, TOMM20, TOMM22, TOMM40 and TOMM70). Interacts with PPP2R2B and TOMM40.

It localises to the mitochondrion outer membrane. In terms of biological role, central receptor component of the translocase of the outer membrane of mitochondria (TOM complex) responsible for the recognition and translocation of cytosolically synthesized mitochondrial preproteins. Together with the peripheral receptor TOM20 functions as the transit peptide receptor and facilitates the movement of preproteins into the translocation pore. Required for the translocation across the mitochondrial outer membrane of cytochrome P450 monooxygenases. This Mus musculus (Mouse) protein is Mitochondrial import receptor subunit TOM22 homolog (Tomm22).